We begin with the raw amino-acid sequence, 234 residues long: Ribosomal RNA large subunit methyltransferase E (234 aa).

Positions 1 to 37 (MSDDDRRRWKGPGPERQDSGRRSTERKVIARNARTES) are disordered. 5 residues coordinate S-adenosyl-L-methionine: Gly-91, Trp-93, Asp-109, Asp-125, and Asp-149. Lys-189 serves as the catalytic Proton acceptor.

It belongs to the class I-like SAM-binding methyltransferase superfamily. RNA methyltransferase RlmE family.

Its subcellular location is the cytoplasm. It carries out the reaction uridine(2552) in 23S rRNA + S-adenosyl-L-methionine = 2'-O-methyluridine(2552) in 23S rRNA + S-adenosyl-L-homocysteine + H(+). In terms of biological role, specifically methylates the uridine in position 2552 of 23S rRNA at the 2'-O position of the ribose in the fully assembled 50S ribosomal subunit. In Hyphomonas neptunium (strain ATCC 15444), this protein is Ribosomal RNA large subunit methyltransferase E.